Here is a 1166-residue protein sequence, read N- to C-terminus: Serine-aspartate repeat-containing protein E (1166 aa).

Positions 1–52 (MINRDNKKAITKKGMISNRLNKFSIRKYTVGTASILVGTTLIFGLGNQEAKA) are cleaved as a signal peptide. A YSIRK-G/S signaling motif motif is present at residues 23–34 (FSIRKYTVGTAS). A ligand binding A region region spans residues 53-606 (AENTSTENAK…GDGTVKPEEK (554 aa)). Residues 54 to 253 (ENTSTENAKQ…HSTKPVATAP (200 aa)) are disordered. A compositionally biased stretch (basic and acidic residues) spans 61–75 (AKQDDATTSDNKEVV). Residues 77–90 (ETENNSTTENNSTN) show a composition bias toward low complexity. The segment covering 92 to 108 (IKKETNTDSQPEAKKES) has biased composition (basic and acidic residues). Polar residues predominate over residues 118–129 (NNVTATTETKPQ). Basic and acidic residues predominate over residues 130-145 (NIEKENVKPSTDKTAT). Residues 166–178 (TTKPSTSEPSTSE) show a composition bias toward low complexity. Residues 179–212 (IQTKPTTPQESTNIENSQPQPTPSKVDNQVTDAT) are compositionally biased toward polar residues. Positions 221 to 246 (SKEELKKNPEKLKELVRNDSNTDHST) are enriched in basic and acidic residues. 3 CNA-B domains span residues 607–719 (LYKI…YKEP), 720–829 (KYNL…YKTP), and 830–940 (KYSL…EEDT). The interval 904–1141 (VTNTTEDDKD…TGSENNGSNN (238 aa)) is disordered. Composition is skewed to acidic residues over residues 908–918 (TEDDKDADGGE) and 935–1105 (YFEE…DSDS). An LPXTG sorting signal motif is present at residues 1129-1133 (LPETG). Pentaglycyl murein peptidoglycan amidated threonine is present on T1132. Residues 1133–1166 (GSENNGSNNATLFGGLFAALGSLLLFGRRKKQNK) constitute a propeptide, removed by sortase.

This sequence belongs to the serine-aspartate repeat-containing protein (SDr) family. Interacts with host complement factor H/CFAH (via C-terminus). Interacts with host complement regulator C4BPA.

It localises to the secreted. The protein resides in the cell wall. Functionally, cell surface-associated calcium-binding protein which plays an important role in adhesion and pathogenesis. Contributes to the resistance to killing by innate immune components in blood and thus attenuates bacterial clearance by interacting with host complement factor H/CFAH and modulating its activity. Also inhibits bacterial opsonization and killing by interacting with host complement regulator C4BPA and thus inhibiting classical complement pathway activation. In Staphylococcus aureus (strain COL), this protein is Serine-aspartate repeat-containing protein E (sdrE).